The sequence spans 258 residues: MDSFCLHHYQFSSRLILGTGRYSSPSLAQQSIEASGCEIVTVAVRRFHALHAFTPLINWNRYWLLPNTAGCRTCSEAVRVALLARQLLQHLQQPHQCLIKLEVIPDPLYLLPDPLGTLKAAEILVRKGFAVLPYIYPDPVLALQLEQIGCAAVMPLASPIGSGQGIQHVHSLQLILQNARIPVIIDAGLALPSDASRVMEMGASAVLINSAIALSPSPVSMAHAMKLAVQAGRLAFLAGRMPLSSSAHASSASFGSFL.

Lysine 100 serves as the catalytic Schiff-base intermediate with DXP. 1-deoxy-D-xylulose 5-phosphate contacts are provided by residues glycine 161, 187–188 (AG), and 209–210 (NS).

The protein belongs to the ThiG family. Homotetramer. Forms heterodimers with either ThiH or ThiS.

The protein localises to the plastid. It localises to the chloroplast. The enzyme catalyses [ThiS sulfur-carrier protein]-C-terminal-Gly-aminoethanethioate + 2-iminoacetate + 1-deoxy-D-xylulose 5-phosphate = [ThiS sulfur-carrier protein]-C-terminal Gly-Gly + 2-[(2R,5Z)-2-carboxy-4-methylthiazol-5(2H)-ylidene]ethyl phosphate + 2 H2O + H(+). Its pathway is cofactor biosynthesis; thiamine diphosphate biosynthesis. Catalyzes the rearrangement of 1-deoxy-D-xylulose 5-phosphate (DXP) to produce the thiazole phosphate moiety of thiamine. Sulfur is provided by the thiocarboxylate moiety of the carrier protein ThiS. In vitro, sulfur can be provided by H(2)S. This chain is Thiazole synthase, found in Cyanidioschyzon merolae (strain NIES-3377 / 10D) (Unicellular red alga).